We begin with the raw amino-acid sequence, 603 residues long: Elongation factor 4 (603 aa).

The tr-type G domain maps to 7–189 (SRIRNFSIIA…SIVHLVPPPQ (183 aa)). Residues 19 to 24 (DHGKST) and 136 to 139 (NKID) each bind GTP.

It belongs to the TRAFAC class translation factor GTPase superfamily. Classic translation factor GTPase family. LepA subfamily.

It is found in the cell inner membrane. It catalyses the reaction GTP + H2O = GDP + phosphate + H(+). In terms of biological role, required for accurate and efficient protein synthesis under certain stress conditions. May act as a fidelity factor of the translation reaction, by catalyzing a one-codon backward translocation of tRNAs on improperly translocated ribosomes. Back-translocation proceeds from a post-translocation (POST) complex to a pre-translocation (PRE) complex, thus giving elongation factor G a second chance to translocate the tRNAs correctly. Binds to ribosomes in a GTP-dependent manner. The sequence is that of Elongation factor 4 from Cyanothece sp. (strain PCC 7425 / ATCC 29141).